A 101-amino-acid chain; its full sequence is NAD(P)H-quinone oxidoreductase subunit 4L, chloroplastic (101 aa).

The next 3 membrane-spanning stretches (helical) occupy residues 2 to 22, 32 to 52, and 61 to 81; these read ILEH…YGLI, MCLE…SDFF, and IFSI…LAIV.

The protein belongs to the complex I subunit 4L family. As to quaternary structure, NDH is composed of at least 16 different subunits, 5 of which are encoded in the nucleus.

The protein resides in the plastid. The protein localises to the chloroplast thylakoid membrane. It catalyses the reaction a plastoquinone + NADH + (n+1) H(+)(in) = a plastoquinol + NAD(+) + n H(+)(out). The catalysed reaction is a plastoquinone + NADPH + (n+1) H(+)(in) = a plastoquinol + NADP(+) + n H(+)(out). NDH shuttles electrons from NAD(P)H:plastoquinone, via FMN and iron-sulfur (Fe-S) centers, to quinones in the photosynthetic chain and possibly in a chloroplast respiratory chain. The immediate electron acceptor for the enzyme in this species is believed to be plastoquinone. Couples the redox reaction to proton translocation, and thus conserves the redox energy in a proton gradient. The polypeptide is NAD(P)H-quinone oxidoreductase subunit 4L, chloroplastic (Oenothera argillicola (Appalachian evening primrose)).